The following is a 210-amino-acid chain: Probable GTP-binding protein EngB (210 aa).

The EngB-type G domain occupies 30 to 204; sequence QGYEVAFAGR…YKVLAGWMEL (175 aa). Residues 38 to 45, 64 to 68, 82 to 85, 149 to 152, and 182 to 185 each bind GTP; these read GRSNAGKS, GRTQL, DLPG, TKAD, and LFSA. Mg(2+) contacts are provided by S45 and T66.

The protein belongs to the TRAFAC class TrmE-Era-EngA-EngB-Septin-like GTPase superfamily. EngB GTPase family. Requires Mg(2+) as cofactor.

In terms of biological role, necessary for normal cell division and for the maintenance of normal septation. The chain is Probable GTP-binding protein EngB from Pseudomonas putida (strain W619).